A 406-amino-acid polypeptide reads, in one-letter code: O-succinylhomoserine sulfhydrylase (406 aa).

At K219 the chain carries N6-(pyridoxal phosphate)lysine.

Belongs to the trans-sulfuration enzymes family. MetZ subfamily. As to quaternary structure, homotetramer. The cofactor is pyridoxal 5'-phosphate.

It carries out the reaction O-succinyl-L-homoserine + hydrogen sulfide = L-homocysteine + succinate. It participates in amino-acid biosynthesis; L-methionine biosynthesis via de novo pathway; L-homocysteine from O-succinyl-L-homoserine: step 1/1. Catalyzes the formation of L-homocysteine from O-succinyl-L-homoserine (OSHS) and hydrogen sulfide. The chain is O-succinylhomoserine sulfhydrylase from Mycobacterium tuberculosis (strain CDC 1551 / Oshkosh).